A 508-amino-acid polypeptide reads, in one-letter code: Photosystem II CP47 reaction center protein (508 aa).

Transmembrane regions (helical) follow at residues Ala-21–Ser-36, Ile-101–Trp-115, Gly-140–Phe-156, Ile-203–Ser-218, Val-237–Val-252, and Ser-457–Arg-472.

The protein belongs to the PsbB/PsbC family. PsbB subfamily. In terms of assembly, PSII is composed of 1 copy each of membrane proteins PsbA, PsbB, PsbC, PsbD, PsbE, PsbF, PsbH, PsbI, PsbJ, PsbK, PsbL, PsbM, PsbT, PsbX, PsbY, PsbZ, Psb30/Ycf12, at least 3 peripheral proteins of the oxygen-evolving complex and a large number of cofactors. It forms dimeric complexes. Binds multiple chlorophylls. PSII binds additional chlorophylls, carotenoids and specific lipids. serves as cofactor.

It localises to the plastid. The protein resides in the chloroplast thylakoid membrane. In terms of biological role, one of the components of the core complex of photosystem II (PSII). It binds chlorophyll and helps catalyze the primary light-induced photochemical processes of PSII. PSII is a light-driven water:plastoquinone oxidoreductase, using light energy to abstract electrons from H(2)O, generating O(2) and a proton gradient subsequently used for ATP formation. The sequence is that of Photosystem II CP47 reaction center protein from Ranunculus macranthus (Large buttercup).